Here is a 108-residue protein sequence, read N- to C-terminus: Probable 4-amino-4-deoxy-L-arabinose-phosphoundecaprenol flippase subunit ArnE (108 aa).

The next 3 membrane-spanning stretches (helical) occupy residues 36–56 (SLWLALACLGSGLLIWLLVLQ), 58–78 (LDVGIAYPMLGVNFVLITLAG), and 85–105 (PVDVRHWLGIALILVGVFQLG).

It belongs to the ArnE family. In terms of assembly, heterodimer of ArnE and ArnF.

It is found in the cell inner membrane. It participates in bacterial outer membrane biogenesis; lipopolysaccharide biosynthesis. Translocates 4-amino-4-deoxy-L-arabinose-phosphoundecaprenol (alpha-L-Ara4N-phosphoundecaprenol) from the cytoplasmic to the periplasmic side of the inner membrane. The polypeptide is Probable 4-amino-4-deoxy-L-arabinose-phosphoundecaprenol flippase subunit ArnE (Pseudomonas syringae pv. syringae (strain B728a)).